The primary structure comprises 156 residues: 6,7-dimethyl-8-ribityllumazine synthase (156 aa).

Residues Phe22, 56–58 (AFE), and 80–82 (AVV) contribute to the 5-amino-6-(D-ribitylamino)uracil site. A (2S)-2-hydroxy-3-oxobutyl phosphate-binding site is contributed by 85 to 86 (ET). The active-site Proton donor is His88. Position 113 (Phe113) interacts with 5-amino-6-(D-ribitylamino)uracil. Arg127 is a binding site for (2S)-2-hydroxy-3-oxobutyl phosphate.

It belongs to the DMRL synthase family.

The catalysed reaction is (2S)-2-hydroxy-3-oxobutyl phosphate + 5-amino-6-(D-ribitylamino)uracil = 6,7-dimethyl-8-(1-D-ribityl)lumazine + phosphate + 2 H2O + H(+). It functions in the pathway cofactor biosynthesis; riboflavin biosynthesis; riboflavin from 2-hydroxy-3-oxobutyl phosphate and 5-amino-6-(D-ribitylamino)uracil: step 1/2. Functionally, catalyzes the formation of 6,7-dimethyl-8-ribityllumazine by condensation of 5-amino-6-(D-ribitylamino)uracil with 3,4-dihydroxy-2-butanone 4-phosphate. This is the penultimate step in the biosynthesis of riboflavin. This Pediococcus pentosaceus (strain ATCC 25745 / CCUG 21536 / LMG 10740 / 183-1w) protein is 6,7-dimethyl-8-ribityllumazine synthase.